A 613-amino-acid polypeptide reads, in one-letter code: DNA mismatch repair protein MutL (613 aa).

This sequence belongs to the DNA mismatch repair MutL/HexB family.

In terms of biological role, this protein is involved in the repair of mismatches in DNA. It is required for dam-dependent methyl-directed DNA mismatch repair. May act as a 'molecular matchmaker', a protein that promotes the formation of a stable complex between two or more DNA-binding proteins in an ATP-dependent manner without itself being part of a final effector complex. This is DNA mismatch repair protein MutL from Flavobacterium psychrophilum (strain ATCC 49511 / DSM 21280 / CIP 103535 / JIP02/86).